A 165-amino-acid chain; its full sequence is Putative 4-hydroxy-4-methyl-2-oxoglutarate aldolase (165 aa).

Substrate is bound by residues 80 to 83 (GGNL) and arginine 102. Residue aspartate 103 coordinates a divalent metal cation.

Belongs to the class II aldolase/RraA-like family. As to quaternary structure, homotrimer. A divalent metal cation is required as a cofactor.

The catalysed reaction is 4-hydroxy-4-methyl-2-oxoglutarate = 2 pyruvate. The enzyme catalyses oxaloacetate + H(+) = pyruvate + CO2. In terms of biological role, catalyzes the aldol cleavage of 4-hydroxy-4-methyl-2-oxoglutarate (HMG) into 2 molecules of pyruvate. Also contains a secondary oxaloacetate (OAA) decarboxylase activity due to the common pyruvate enolate transition state formed following C-C bond cleavage in the retro-aldol and decarboxylation reactions. This Cupriavidus taiwanensis (strain DSM 17343 / BCRC 17206 / CCUG 44338 / CIP 107171 / LMG 19424 / R1) (Ralstonia taiwanensis (strain LMG 19424)) protein is Putative 4-hydroxy-4-methyl-2-oxoglutarate aldolase.